The chain runs to 299 residues: tRNA-cytidine(32) 2-sulfurtransferase (299 aa).

The short motif at 56 to 61 (SGGKDS) is the PP-loop motif element. Positions 131, 134, and 222 each coordinate [4Fe-4S] cluster.

Belongs to the TtcA family. As to quaternary structure, homodimer. It depends on Mg(2+) as a cofactor. [4Fe-4S] cluster serves as cofactor.

The protein resides in the cytoplasm. The enzyme catalyses cytidine(32) in tRNA + S-sulfanyl-L-cysteinyl-[cysteine desulfurase] + AH2 + ATP = 2-thiocytidine(32) in tRNA + L-cysteinyl-[cysteine desulfurase] + A + AMP + diphosphate + H(+). The protein operates within tRNA modification. In terms of biological role, catalyzes the ATP-dependent 2-thiolation of cytidine in position 32 of tRNA, to form 2-thiocytidine (s(2)C32). The sulfur atoms are provided by the cysteine/cysteine desulfurase (IscS) system. The protein is tRNA-cytidine(32) 2-sulfurtransferase of Xylella fastidiosa (strain 9a5c).